The primary structure comprises 104 residues: Large ribosomal subunit protein uL24 (104 aa).

Belongs to the universal ribosomal protein uL24 family. In terms of assembly, part of the 50S ribosomal subunit.

In terms of biological role, one of two assembly initiator proteins, it binds directly to the 5'-end of the 23S rRNA, where it nucleates assembly of the 50S subunit. Functionally, one of the proteins that surrounds the polypeptide exit tunnel on the outside of the subunit. This chain is Large ribosomal subunit protein uL24, found in Idiomarina loihiensis (strain ATCC BAA-735 / DSM 15497 / L2-TR).